The chain runs to 239 residues: Octanoyl-[acyl-carrier-protein]:protein N-octanoyltransferase LIPT2, mitochondrial (239 aa).

Residues 1 to 18 constitute a mitochondrion transit peptide; sequence MSVPVLRVRRLGLVGYAE. Residues 37 to 217 form the BPL/LPL catalytic domain; it reads GSPGGALLLC…AFEEEFQCQL (181 aa). Substrate is bound by residues 81-88, 147-149, and 160-162; these read RGGLITFH, AIG, and GLA. Cysteine 178 functions as the Acyl-thioester intermediate in the catalytic mechanism. The tract at residues 220 to 239 is disordered; sequence EQNPEQNPVQNRPDRDAGPL.

This sequence belongs to the LipB family.

It localises to the mitochondrion. It carries out the reaction octanoyl-[ACP] + L-lysyl-[protein] = N(6)-octanoyl-L-lysyl-[protein] + holo-[ACP] + H(+). It participates in protein modification; protein lipoylation via endogenous pathway; protein N(6)-(lipoyl)lysine from octanoyl-[acyl-carrier-protein]: step 1/2. Catalyzes the transfer of endogenously produced octanoic acid from octanoyl-acyl-carrier-protein (octanoyl-ACP) onto the lipoyl domains of lipoate-dependent enzymes such as the protein H of the glycine cleavage system (GCSH). Lipoyl-ACP can also act as a substrate although octanoyl-ACP is likely to be the physiological substrate. This is Octanoyl-[acyl-carrier-protein]:protein N-octanoyltransferase LIPT2, mitochondrial (lipt2) from Xenopus tropicalis (Western clawed frog).